The following is a 249-amino-acid chain: MDTVRLQCHICCSVGEIKNYFLQPVDAITILPIVELHTCRHQLCVMCVRKIAQRGRDKRVECPMCRRKNAHFNVYSVNRNSVDVLRCSVADVREHGRFGGLADAASLARGLFEPSLLEAEPAPDNSFGPNELQLVLKRLKAQIEAQTRTNYDLQLQATALERTIEEANDRLGKSRGDYSDACKLMDELRGDRLRAERAVKALADAHAQWADKNAKMRRENDRLTNENIGLIRDNNLFKQNTARKRKIAP.

The RING-type zinc finger occupies 8–66; the sequence is CHICCSVGEIKNYFLQPVDAITILPIVELHTCRHQLCVMCVRKIAQRGRDKRVECPMCR.

The protein is Zinc finger protein CG30 (CG30) of Orgyia pseudotsugata (Douglas-fir tussock moth).